The chain runs to 380 residues: Ankyrin repeat domain-containing protein 63 (380 aa).

5 ANK repeats span residues 11-40 (AGTR…RSII), 46-79 (QGRT…AVNL), 83-112 (RGRT…DPEA), 116-145 (AGNS…RLGL), and 153-182 (AGLT…RAAA). Composition is skewed to low complexity over residues 181 to 203 (AAAA…PAAS) and 216 to 226 (RPLLARFARAA). The interval 181–256 (AAAAAARGSN…GSERPELGRS (76 aa)) is disordered. Ser-193 carries the phosphoserine modification. Position 294 is a phosphoserine (Ser-294). A disordered region spans residues 309–368 (PIGLSPHPEGGPGSGRLGLRRRSTAPDIPSLVGEAPGPESGPELEANALSVSVPGPNPWQ).

The protein is Ankyrin repeat domain-containing protein 63 of Homo sapiens (Human).